The following is a 633-amino-acid chain: Bifunctional enzyme CysN/CysC (633 aa).

A sulfate adenylyltransferase region spans residues 1 to 463; it reads MSHQSDLISE…REERAGRFGQ (463 aa). The tr-type G domain maps to 22-241; it reads KELLRFLTCG…TVEIAADRNL (220 aa). The tract at residues 31–38 is G1; the sequence is GNVDDGKS. 31 to 38 is a GTP binding site; it reads GNVDDGKS. Residues 89-93 are G2; the sequence is GITID. A G3 region spans residues 110–113; the sequence is DTPG. GTP-binding positions include 110–114 and 165–168; these read DTPGH and NKMD. The interval 165–168 is G4; that stretch reads NKMD. Positions 204-206 are G5; it reads SAL. The tract at residues 464–633 is adenylyl-sulfate kinase; sequence QPATVLFSGL…LDLLRERQAI (170 aa). 472–479 lines the ATP pocket; it reads GLSGAGKS.

It in the C-terminal section; belongs to the APS kinase family. This sequence in the N-terminal section; belongs to the TRAFAC class translation factor GTPase superfamily. Classic translation factor GTPase family. CysN/NodQ subfamily. In terms of assembly, heterodimer composed of CysD, the smaller subunit, and CysNC.

The catalysed reaction is sulfate + ATP + H(+) = adenosine 5'-phosphosulfate + diphosphate. It carries out the reaction adenosine 5'-phosphosulfate + ATP = 3'-phosphoadenylyl sulfate + ADP + H(+). The protein operates within sulfur metabolism; hydrogen sulfide biosynthesis; sulfite from sulfate: step 1/3. It functions in the pathway sulfur metabolism; hydrogen sulfide biosynthesis; sulfite from sulfate: step 2/3. Functionally, with CysD forms the ATP sulfurylase (ATPS) that catalyzes the adenylation of sulfate producing adenosine 5'-phosphosulfate (APS) and diphosphate, the first enzymatic step in sulfur assimilation pathway. APS synthesis involves the formation of a high-energy phosphoric-sulfuric acid anhydride bond driven by GTP hydrolysis by CysN coupled to ATP hydrolysis by CysD. Its function is as follows. APS kinase catalyzes the synthesis of activated sulfate. The polypeptide is Bifunctional enzyme CysN/CysC (cysNC) (Pseudomonas aeruginosa (strain ATCC 15692 / DSM 22644 / CIP 104116 / JCM 14847 / LMG 12228 / 1C / PRS 101 / PAO1)).